Here is a 358-residue protein sequence, read N- to C-terminus: Peptide chain release factor 1 (358 aa).

N5-methylglutamine is present on Q233.

Belongs to the prokaryotic/mitochondrial release factor family. Methylated by PrmC. Methylation increases the termination efficiency of RF1.

The protein resides in the cytoplasm. In terms of biological role, peptide chain release factor 1 directs the termination of translation in response to the peptide chain termination codons UAG and UAA. This Listeria innocua serovar 6a (strain ATCC BAA-680 / CLIP 11262) protein is Peptide chain release factor 1.